Consider the following 348-residue polypeptide: Phenylalanine--tRNA ligase alpha subunit (348 aa).

Glutamate 268 contacts Mg(2+).

This sequence belongs to the class-II aminoacyl-tRNA synthetase family. Phe-tRNA synthetase alpha subunit type 1 subfamily. In terms of assembly, tetramer of two alpha and two beta subunits. It depends on Mg(2+) as a cofactor.

The protein resides in the cytoplasm. The enzyme catalyses tRNA(Phe) + L-phenylalanine + ATP = L-phenylalanyl-tRNA(Phe) + AMP + diphosphate + H(+). The protein is Phenylalanine--tRNA ligase alpha subunit of Bordetella bronchiseptica (strain ATCC BAA-588 / NCTC 13252 / RB50) (Alcaligenes bronchisepticus).